The following is a 588-amino-acid chain: Oxidoreductase NdmD (588 aa).

The Rieske domain maps to Trp9–Thr114. [2Fe-2S] cluster contacts are provided by Cys50, His52, Cys69, and His72. The FAD-binding FR-type domain maps to Pro272–Val373. In terms of domain architecture, 2Fe-2S ferredoxin-type spans Tyr503 to Leu588. [2Fe-2S] cluster contacts are provided by Cys537, Cys542, Cys545, and Cys575.

It depends on [2Fe-2S] cluster as a cofactor.

In terms of biological role, involved in the caffeine degradation, which is the essential first step for assimilating the carbon and nitrogen in caffeine. Catalyzes the oxidation of NADH and transfers electrons to NdmA and NdmB, which catalyze the N-demethylation reactions. The sequence is that of Oxidoreductase NdmD (ndmD) from Pseudomonas putida (Arthrobacter siderocapsulatus).